Reading from the N-terminus, the 238-residue chain is Small ribosomal subunit protein uS2 (238 aa).

This sequence belongs to the universal ribosomal protein uS2 family.

The chain is Small ribosomal subunit protein uS2 from Synechococcus sp. (strain CC9605).